A 260-amino-acid chain; its full sequence is Activator of 90 kDa heat shock protein ATPase homolog 2 (260 aa).

It belongs to the AHA1 family.

Functionally, co-chaperone that stimulates HSP90 ATPase activity. The chain is Activator of 90 kDa heat shock protein ATPase homolog 2 (AHSA2) from Bos taurus (Bovine).